The chain runs to 456 residues: Serine/threonine-protein kinase PBS1 (456 aa).

The segment at 1–57 is disordered; the sequence is MGCFSCFDSSDDEKLNPVDESNHGQKKQSQPTVSNNISGLPSGGEKLSSKTNGGSKR. Gly-2 is lipidated: N-myristoyl glycine. S-palmitoyl cysteine attachment occurs at residues Cys-3 and Cys-6. The span at 12–23 shows a compositional bias: basic and acidic residues; sequence DEKLNPVDESNH. Ser-21 is subject to Phosphoserine. The segment covering 27-39 has biased composition (polar residues); sequence KQSQPTVSNNISG. In terms of domain architecture, Protein kinase spans 86–363; that stretch reads FHPDTFLGEG…ADVVTALSYL (278 aa). Residues 92–100 and Lys-115 contribute to the ATP site; that span reads LGEGGFGRV. Tyr-160 bears the Phosphotyrosine mark. Asp-213 acts as the Proton acceptor in catalysis. Phosphoserine occurs at positions 217 and 247. 2 positions are modified to phosphothreonine: Thr-248 and Thr-253. Tyr-261 is modified (phosphotyrosine). Positions 292-296 match the Recognition motif required for RPS5-mediated plant resistance to P.syringae motif; sequence SEMPH. The segment at 368-456 is disordered; it reads YDPSKDDSRR…QGTSESNSTG (89 aa). 2 stretches are compositionally biased toward basic and acidic residues: residues 370–392 and 400–429; these read PSKD…RNDD and FDLE…RAVA. A compositionally biased stretch (polar residues) spans 446–456; it reads EQGTSESNSTG.

Belongs to the protein kinase superfamily. Ser/Thr protein kinase family. In infected plant cells, it interacts with the P.syringae virulence protein avrPphB. In uninfected plants, autophosphorylated form interacts with RPS5. Interacts with FLS2. Post-translationally, cleaved by avrPphB in infected plant cells. Its cleavage serves as a signal that triggers the RPS5-mediated defense system. In terms of processing, autophosphorylates. Autophosphorylation may be required to trigger the RPS5-mediated plant defense system. Palmitoylation at Cys-3 and Cys-6 are required for plasma membrane location that is essential for the RPS5-mediated plant defense response.

It is found in the cell membrane. The enzyme catalyses L-seryl-[protein] + ATP = O-phospho-L-seryl-[protein] + ADP + H(+). The catalysed reaction is L-threonyl-[protein] + ATP = O-phospho-L-threonyl-[protein] + ADP + H(+). Functionally, protein kinase required for plant defense mechanism mediated by the disease resistance (R) protein RPS5. In case of infection by Pseudomonas syringae, AvrPphB triggers RPS5-mediated defense mechanism via the cleavage of PBS1. Both kinase activity and cleavage by avrPphB are independently required to trigger the RPS5-mediated resistance. Contributes to PAMP-triggered immunity (PTI) signaling and defense responses downstream of FLS2. The sequence is that of Serine/threonine-protein kinase PBS1 from Arabidopsis thaliana (Mouse-ear cress).